The primary structure comprises 268 residues: uncharacterized protein (268 aa).

The HTH iclR-type domain occupies N15–I77. Residues L37–Q56 constitute a DNA-binding region (H-T-H motif). The 174-residue stretch at I92–Y265 folds into the IclR-ED domain.

This is an uncharacterized protein from Haemophilus influenzae (strain ATCC 51907 / DSM 11121 / KW20 / Rd).